A 394-amino-acid polypeptide reads, in one-letter code: MTHEPLTASVGIVTPQHVRLFGASTPLQLDGGTLLHSVDVSYETYGTLNQERSNAVLICHALSGNAHAAGYHSKDDKRPGWWDHYIGPGKPFDTNRYFVIASNNLGGCDGTTGPSSIDPATGMPYGLNFPMITIGDIVRVQHALVRQLGIERLMAVVGGSMGGMQALQWALDYPHMVPASVIIAAAPRLTAQNIAFNAVARQAIMADPHFNGGDYYTLPGDPTTKARPESGLALARMMAHITYLSEQGLHERFGRRLQDRDALSYGFETDFAVESYLSYQGSSFVKRFDANSYLYITKAMDYFDPFPDAETTVQRLTGVESHFLVMSFDTDWRFDTSRSKELVRILHRSLKDCTFQEFSSPAGHDAFLLPHPSYEKSLGSFLLRTWQSITGGQA.

In terms of domain architecture, AB hydrolase-1 spans Asn54 to Leu368. Catalysis depends on Ser160, which acts as the Nucleophile. Arg236 contacts substrate. Catalysis depends on residues Asp331 and His364. A substrate-binding site is contributed by Asp365.

This sequence belongs to the AB hydrolase superfamily. MetX family. In terms of assembly, homodimer.

The protein resides in the cytoplasm. It carries out the reaction L-homoserine + succinyl-CoA = O-succinyl-L-homoserine + CoA. Its pathway is amino-acid biosynthesis; L-methionine biosynthesis via de novo pathway; O-succinyl-L-homoserine from L-homoserine: step 1/1. Functionally, transfers a succinyl group from succinyl-CoA to L-homoserine, forming succinyl-L-homoserine. The chain is Homoserine O-succinyltransferase from Magnetococcus marinus (strain ATCC BAA-1437 / JCM 17883 / MC-1).